We begin with the raw amino-acid sequence, 262 residues long: F-actin-capping protein subunit alpha (262 aa).

The protein belongs to the F-actin-capping protein alpha subunit family. Heterodimer of an alpha and a beta subunit.

F-actin-capping proteins bind in a Ca(2+)-independent manner to the fast growing ends of actin filaments (barbed end) thereby blocking the exchange of subunits at these ends. Unlike other capping proteins (such as gelsolin and severin), these proteins do not sever actin filaments. The sequence is that of F-actin-capping protein subunit alpha (CAP1) from Kluyveromyces lactis (strain ATCC 8585 / CBS 2359 / DSM 70799 / NBRC 1267 / NRRL Y-1140 / WM37) (Yeast).